The chain runs to 255 residues: TIR domain-containing protein (255 aa).

The 177-residue stretch at L9–L185 folds into the TIR domain. Residue E83 is part of the active site. 2 consecutive transmembrane segments (helical) span residues A195–P215 and F223–W243. One can recognise a KASH domain in the interval L201–S255.

As to quaternary structure, forms homomers. Interacts with SUN1, SUN2, SUN3, SUN4 and SUN5.

Its subcellular location is the nucleus membrane. The enzyme catalyses NAD(+) + H2O = ADP-D-ribose + nicotinamide + H(+). Its function is as follows. Could play a role in nuclear morphology, specifically nuclear size. This chain is TIR domain-containing protein, found in Arabidopsis thaliana (Mouse-ear cress).